Consider the following 237-residue polypeptide: MKKITLALSAVCLLFTLNHSANALVSSPSTLNPGTNVAKLAEQAPVHWVSVAQIENSLTGRPPMAVGFDIDDTVLFSSPGFWRGKKTYSPNSDDYLKNPAFWEKMNNGWDEFSIPKEVARQLIDMHVRRGDSIYFVTGRSQTKTETVTNTLADNFHIPAANMNPVIFAGDKPGQNTKIQWLQEKNIRIFYGDSDNDITAARDCGIRGIRILRAANSTYKPLPQAGAFGEEVIVNSEY.

The N-terminal stretch at 1 to 23 (MKKITLALSAVCLLFTLNHSANA) is a signal peptide. Catalysis depends on Asp69, which acts as the Nucleophile. Mg(2+) contacts are provided by Asp69 and Asp71. Asp71 acts as the Proton donor in catalysis. Residues 137 to 138 (TG) and Lys177 each bind substrate. Asp192 contacts Mg(2+).

Belongs to the class B bacterial acid phosphatase family. Homotetramer. Mg(2+) serves as cofactor.

The protein localises to the periplasm. The enzyme catalyses a phosphate monoester + H2O = an alcohol + phosphate. Dephosphorylates several organic phosphate monoesters. Also has a phosphotransferase activity catalyzing the transfer of low-energy phosphate groups from organic phosphate monoesters to free hydroxyl groups of various organic compounds. This is Class B acid phosphatase from Salmonella arizonae (strain ATCC BAA-731 / CDC346-86 / RSK2980).